A 306-amino-acid chain; its full sequence is tRNA (guanine-N(7)-)-methyltransferase (306 aa).

Residues 1–19 (MSSTAPLDSKATEQITTAA) are compositionally biased toward polar residues. The tract at residues 1–65 (MSSTAPLDSK…EASPELPSDE (65 aa)) is disordered. Residues Gly-121, 144-145 (EI), 180-181 (NA), and Cys-200 each bind S-adenosyl-L-methionine. Asp-203 is an active-site residue. S-adenosyl-L-methionine is bound at residue 278–280 (TEE).

Belongs to the class I-like SAM-binding methyltransferase superfamily. TrmB family. Forms a complex with TRM82.

Its subcellular location is the nucleus. It carries out the reaction guanosine(46) in tRNA + S-adenosyl-L-methionine = N(7)-methylguanosine(46) in tRNA + S-adenosyl-L-homocysteine. It participates in tRNA modification; N(7)-methylguanine-tRNA biosynthesis. Functionally, catalyzes the formation of N(7)-methylguanine at position 46 (m7G46) in tRNA. The sequence is that of tRNA (guanine-N(7)-)-methyltransferase from Lodderomyces elongisporus (strain ATCC 11503 / CBS 2605 / JCM 1781 / NBRC 1676 / NRRL YB-4239) (Yeast).